The following is a 1555-amino-acid chain: UDP-glucose:glycoprotein glucosyltransferase 1 (1555 aa).

The N-terminal stretch at 1 to 42 (MGCKGDASGACAAGALPVTGVCYKMGVLVVLTVLWLFSSVKA) is a signal peptide. N-linked (GlcNAc...) asparagine glycans are attached at residues N536 and N1228. The tract at residues 1244-1555 (KTEEVKQDKD…REGPQKREEL (312 aa)) is glucosyltransferase. S1277 bears the Phosphoserine mark. Residues 1534-1555 (GALYKEKTKEPSREGPQKREEL) form a disordered region. The Prevents secretion from ER motif lies at 1552–1555 (REEL).

Belongs to the glycosyltransferase 8 family. As to quaternary structure, monomer as well as in a tight complex with SELENOF. Interacts with METTL23. Part of a large chaperone multiprotein complex comprising DNAJB11, HSP90B1, HSPA5, HYOU, PDIA2, PDIA4, PDIA6, PPIB, SDF2L1, UGGT1 and very small amounts of ERP29, but not, or at very low levels, CALR nor CANX. The cofactor is Ca(2+). Requires Mn(2+) as cofactor. As to expression, higher levels in pancreas, skeletal muscle, kidney, and brain. Low levels in lung and heart.

The protein localises to the endoplasmic reticulum lumen. Its subcellular location is the endoplasmic reticulum-Golgi intermediate compartment. The catalysed reaction is N(4)-(alpha-D-Man-(1-&gt;2)-alpha-D-Man-(1-&gt;2)-alpha-D-Man-(1-&gt;3)-[alpha-D-Man-(1-&gt;2)-alpha-D-Man-(1-&gt;3)-[alpha-D-Man-(1-&gt;2)-alpha-D-Man-(1-&gt;6)]-alpha-D-Man-(1-&gt;6)]-beta-D-Man-(1-&gt;4)-beta-D-GlcNAc-(1-&gt;4)-beta-D-GlcNAc)-L-asparaginyl-[protein] (N-glucan mannose isomer 9A1,2,3B1,2,3) + UDP-alpha-D-glucose = N(4)-(alpha-D-Glc-(1-&gt;3)-alpha-D-Man-(1-&gt;2)-alpha-D-Man-(1-&gt;2)-alpha-D-Man-(1-&gt;3)-[alpha-D-Man-(1-&gt;2)-alpha-D-Man-(1-&gt;3)-[alpha-D-Man-(1-&gt;2)-alpha-D-Man-(1-&gt;6)]-alpha-D-Man-(1-&gt;6)]-beta-D-Man-(1-&gt;4)-beta-D-GlcNAc-(1-&gt;4)-beta-D-GlcNAc)-L-asparaginyl-[protein] + UDP + H(+). Its pathway is protein modification; protein glycosylation. With respect to regulation, catalytic activity is enhanced by complex formation with SELENOF. Its function is as follows. Recognizes glycoproteins with minor folding defects. Reglucosylates single N-glycans near the misfolded part of the protein, thus providing quality control for protein folding in the endoplasmic reticulum. Reglucosylated proteins are recognized by calreticulin for recycling to the endoplasmic reticulum and refolding or degradation. This is UDP-glucose:glycoprotein glucosyltransferase 1 (UGGT1) from Homo sapiens (Human).